Consider the following 427-residue polypeptide: MSTNAELFDRACRSIPGGVNSPVRAFRSVGGTPRFIQRAQGPYVWDAEGKQYIDYVGSWGPAILGHAHPEVVRAVQEAAVHGLSFGAPTEAEVELAEMLIARLPSLEQVRLVSSGTEATMTAIRLARGATGRHKIIKFEGCYHGHSDSLLVKAGSGLLTFGNPSSAGVPPEFVAHTLTLEFNNLAAVDAAFSQHGAEIACVIVEPVAGNMNLIKPAEGFLAGLRELCTRHGAVLIFDEVMTGFRVGPQGVQGLTGVRPDLTTLAKVIGGGMPVGAFGGRADLMAHIAPLGGVYQAGTLSGNPVAVAAGLATMRLIGEPGFYERLSAQTARLAQGLQERARAAGVPFSADAIGGMFGLYFGDRVPASFAEVSACDTEAFKRFFHAMLERGIHFAPSAFEAGFVSATHDDAVIDATLEAAEQVFATLRA.

The residue at position 265 (Lys-265) is an N6-(pyridoxal phosphate)lysine.

It belongs to the class-III pyridoxal-phosphate-dependent aminotransferase family. HemL subfamily. In terms of assembly, homodimer. Requires pyridoxal 5'-phosphate as cofactor.

It localises to the cytoplasm. It carries out the reaction (S)-4-amino-5-oxopentanoate = 5-aminolevulinate. Its pathway is porphyrin-containing compound metabolism; protoporphyrin-IX biosynthesis; 5-aminolevulinate from L-glutamyl-tRNA(Glu): step 2/2. The sequence is that of Glutamate-1-semialdehyde 2,1-aminomutase from Bordetella bronchiseptica (strain ATCC BAA-588 / NCTC 13252 / RB50) (Alcaligenes bronchisepticus).